The following is a 365-amino-acid chain: 3-isopropylmalate dehydrogenase (365 aa).

78 to 91 (GYKWDSLPRSQRPE) is a binding site for NAD(+). Arg-98, Arg-108, Arg-136, and Asp-226 together coordinate substrate. 3 residues coordinate Mg(2+): Asp-226, Asp-250, and Asp-254. Position 284–296 (284–296 (GSAPDIAGQDKAN)) interacts with NAD(+).

Belongs to the isocitrate and isopropylmalate dehydrogenases family. LeuB type 1 subfamily. In terms of assembly, homodimer. Requires Mg(2+) as cofactor. The cofactor is Mn(2+).

Its subcellular location is the cytoplasm. It carries out the reaction (2R,3S)-3-isopropylmalate + NAD(+) = 4-methyl-2-oxopentanoate + CO2 + NADH. It functions in the pathway amino-acid biosynthesis; L-leucine biosynthesis; L-leucine from 3-methyl-2-oxobutanoate: step 3/4. Catalyzes the oxidation of 3-carboxy-2-hydroxy-4-methylpentanoate (3-isopropylmalate) to 3-carboxy-4-methyl-2-oxopentanoate. The product decarboxylates to 4-methyl-2 oxopentanoate. This Synechococcus elongatus (strain ATCC 33912 / PCC 7942 / FACHB-805) (Anacystis nidulans R2) protein is 3-isopropylmalate dehydrogenase.